The chain runs to 241 residues: Eukaryotic translation initiation factor 6 (241 aa).

It belongs to the eIF-6 family. Monomer. Associates with the 60S ribosomal subunit.

It localises to the cytoplasm. Its subcellular location is the nucleus. The protein resides in the nucleolus. Its function is as follows. Binds to the 60S ribosomal subunit and prevents its association with the 40S ribosomal subunit to form the 80S initiation complex in the cytoplasm. Is also involved in ribosome biogenesis. Associates with pre-60S subunits in the nucleus and is involved in its nuclear export. This chain is Eukaryotic translation initiation factor 6, found in Encephalitozoon cuniculi (strain GB-M1) (Microsporidian parasite).